A 255-amino-acid chain; its full sequence is MSLVDVDGLSLRYGARTVLSRVSLSIAPGEIVTIVGPNGSGKTSLLRAIIGAVKPFQGRVTRGAGVTLGYVPQKLHIDETLPMTVARFLRLPGGASEAEIDQALAQAGVRDLSGSQLAQLSGGQFQRVMLARALIGKPDLLLLDEATQGLDQRGSASFYQQIEQVRRDTGCAVLMISHELHVVMSASDRVICLNGHVCCEGTPAVVASAPEYRALFGTGTGGALALYRHEHDHEHDHHDGCAHGQATEDRTEAAE.

One can recognise an ABC transporter domain in the interval 4–219 (VDVDGLSLRY…PEYRALFGTG (216 aa)). Residue 36 to 43 (GPNGSGKT) coordinates ATP. Positions 234–255 (EHDHHDGCAHGQATEDRTEAAE) are disordered.

Belongs to the ABC transporter superfamily. Zinc importer (TC 3.A.1.15.5) family. As to quaternary structure, the complex is composed of two ATP-binding proteins (ZnuC), two transmembrane proteins (ZnuB) and a solute-binding protein (ZnuA).

The protein resides in the cell inner membrane. The catalysed reaction is Zn(2+)(out) + ATP(in) + H2O(in) = Zn(2+)(in) + ADP(in) + phosphate(in) + H(+)(in). Part of the ABC transporter complex ZnuABC involved in zinc import. Responsible for energy coupling to the transport system. This is Zinc import ATP-binding protein ZnuC from Roseobacter denitrificans (strain ATCC 33942 / OCh 114) (Erythrobacter sp. (strain OCh 114)).